Consider the following 806-residue polypeptide: MLISKKTLGVLIPDIFSFSNDQIAQKLEQMGIEVESIKQFNSPDYLQLAKVVSIQPHPHDNKLFICELQIDKNKFINVVSNANNINNPDNINKFVIVAKKGTELLNGLIVKTQNIKGIISEGILCSYIDINPFSRQIIEKTEVADAIIIDHVSNDHDWNQYLSFLSLDDVIFDVKTPTNRADLHSLIFLAKELGVLLKTKTFLKQKSSVVNHDFFKFPLNLKNKLKANYFGGLFLRQINQHSSPWTVKGLLINQMIKPVNYYVDKANLVTVFTAQPIHCHDADRIVGNIELKQATHNETFVGLDDKQYEIEPGDIVVCDEKGIIALVGIIGSKRTMVQPTTTNIFFEVVNCNSETIKQTAKRFLINNFASKFMVKPISLLATDNCLNYLQNSLLTTDNIGKISHFSSSLKVEPFSKKLTVNFHKIRQLIGIEKKELTDQTIKKSLSQLGFKVDNQLLKIPSYRQDINTWQDISEEIVKLIDINKLKPIGITSSFNFEKSSYFNTFNALTKLRKKLQTLGFHNVITYQLTDQKSAKTFNLFNLENFITIKNPVSQNHSVMRVSLIDSLLKVLKTNNNYKNELVNIFEFSFIKTQNNSELHLAVLWVEKLFTSSFNPMQGISNDVFTMKGLAKLIVANLGFSCDFEPLDDSDYFVNNQSLKIVVFNEQIGFIGLIKESLLNNYDLNNKPIYCLEINLDRMLSSLNRIEKNYLGYSKLQPVCKDLTFSFTNPASHFDQFANMIKRITGIESWKLISVFETMQNNQLITKYTVRYFLKNDANKPLTNQTIELITNNLKLQCEKLKIKLDI.

One can recognise a tRNA-binding domain in the interval 40–153; sequence FNSPDYLQLA…ADAIIIDHVS (114 aa). One can recognise a B5 domain in the interval 413–487; that stretch reads PFSKKLTVNF…KLIDINKLKP (75 aa). The Mg(2+) site is built by Asp465, Asp471, Glu474, and Glu475.

The protein belongs to the phenylalanyl-tRNA synthetase beta subunit family. Type 1 subfamily. In terms of assembly, tetramer of two alpha and two beta subunits. The cofactor is Mg(2+).

It is found in the cytoplasm. It catalyses the reaction tRNA(Phe) + L-phenylalanine + ATP = L-phenylalanyl-tRNA(Phe) + AMP + diphosphate + H(+). The polypeptide is Phenylalanine--tRNA ligase beta subunit (pheT) (Mycoplasma genitalium (strain ATCC 33530 / DSM 19775 / NCTC 10195 / G37) (Mycoplasmoides genitalium)).